Consider the following 231-residue polypeptide: 7-cyano-7-deazaguanine synthase (231 aa).

ATP is bound at residue 7 to 17; sequence LSSGLDSVAAL. 4 residues coordinate Zn(2+): cysteine 195, cysteine 203, cysteine 206, and cysteine 209.

It belongs to the QueC family. It depends on Zn(2+) as a cofactor.

It catalyses the reaction 7-carboxy-7-deazaguanine + NH4(+) + ATP = 7-cyano-7-deazaguanine + ADP + phosphate + H2O + H(+). It participates in purine metabolism; 7-cyano-7-deazaguanine biosynthesis. In terms of biological role, catalyzes the ATP-dependent conversion of 7-carboxy-7-deazaguanine (CDG) to 7-cyano-7-deazaguanine (preQ(0)). This chain is 7-cyano-7-deazaguanine synthase, found in Methanosarcina barkeri (strain Fusaro / DSM 804).